Here is a 781-residue protein sequence, read N- to C-terminus: MATQADLMELDMAMEPDRKAAVSHWQQQSYLDSGIHSGATTTAPSLSGKGNPEEEDVDTTQVLYEWEQGFSQSFTQEQVADIDGQYAMTRAQRVRAAMFPETLDEGMQIPSTQFDAAHPTNVQRLAEPSQMLKHAVVNLINYQDDAELATRAIPELTKLLNDEDQVVVNKAAVMVHQLSKKEASRHAIMRSPQMVSAIVRTMQNTNDVETARCTAGTLHNLSHHREGLLAIFKSGGIPALVKMLGSPVDSVLFYAITTLHNLLLHQEGAKMAVRLAGGLQKMVALLNKTNVKFLAITTDCLQILAYGNQESKLIILASGGPQALVNIMRTYTYEKLLWTTSRVLKVLSVCSSNKPAIVEAGGMQALGLHLTDPSQRLVQNCLWTLRNLSDAATKQEGMEGLLGTLVQLLGSDDINVVTCAAGILSNLTCNNYKNKMMVCQVGGIEALVRTVLRAGDREDITEPAICALRHLTSRHQEAEMAQNAVRLHYGLPVVVKLLHPPSHWPLIKATVGLIRNLALCPANHAPLREQGAIPRLVQLLVRAHQDTQRRTSMGGTQQQFVEGVRMEEIVEGCTGALHILARDVHNRIVIRGLNTIPLFVQLLYSPIENIQRVAAGVLCELAQDKEAAEAIEAEGATAPLTELLHSRNEGVATYAAAVLFRMSEDKPQDYKKRLSVELTSSLFRTEPMAWNETADLGLDIGAQGEPLGYRQDDPSYRSFHSGGYGQDALGMDPMMEHEMGGHHPGADYPVDGLPDLGHAQDLMDGLPPGDSNQLAWFDTDL.

Ala2 carries the post-translational modification N-acetylalanine. The interaction with VCL stretch occupies residues Ala2–Ser23. Residue Ser23 is modified to Phosphoserine; by GSK3-beta; alternate. Ser23 carries O-linked (GlcNAc) serine; alternate glycosylation. Ser29 is modified (phosphoserine; by GSK3-beta). A phosphoserine; by GSK3-beta and HIPK2 mark is found at Ser33 and Ser37. The segment at Gly34–Asp56 is disordered. Thr41 carries the post-translational modification Phosphothreonine; by GSK3-beta. At Ser45 the chain carries Phosphoserine. Residue Lys49 is modified to N6-acetyllysine. The residue at position 64 (Tyr64) is a Phosphotyrosine; by PTK6. Tyr142 is modified (phosphotyrosine; by FYN and PTK6). 12 ARM repeats span residues Arg151–Ser191, Gln193–Ser234, Gly235–Ala276, Gly277–Ser318, Gly319–Ala360, Gly361–Ser389, Gly400–Val441, Gly442–Ala484, Tyr489–Gln530, Gly531–Glu571, Asn594–Ala636, and Thr637–Lys666. Residues Leu156–Leu178 are interaction with BCL9. At Ser191 the chain carries Phosphoserine; by CDK5. Ser246 carries the phosphoserine; by CDK5 modification. Phosphotyrosine is present on residues Tyr331 and Tyr333. Ser552 carries the post-translational modification Phosphoserine; by AMPK. Thr556 bears the Phosphothreonine mark. The residue at position 619 (Cys619) is an S-nitrosocysteine. Phosphoserine is present on Ser675. The segment at Glu705–Leu781 is disordered. The span at Met734–Gly745 shows a compositional bias: basic and acidic residues. The interaction with SCRIB stretch occupies residues Asn772–Leu781.

This sequence belongs to the beta-catenin family. Two separate complex-associated pools are found in the cytoplasm. The majority is present as component of an E-cadherin/ catenin adhesion complex composed of at least E-cadherin/CDH1 and beta-catenin/CTNNB1, and possibly alpha-catenin/CTNNA1; the complex is located to adherens junctions. The stable association of CTNNA1 is controversial as CTNNA1 was shown not to bind to F-actin when assembled in the complex. Alternatively, the CTNNA1-containing complex may be linked to F-actin by other proteins such as LIMA1. Another cytoplasmic pool is part of a large complex containing AXIN1, AXIN2, APC, CSNK1A1 and GSK3B that promotes phosphorylation on N-terminal Ser and Thr residues and ubiquitination of CTNNB1 via BTRC and its subsequent degradation by the proteasome. Wnt-dependent activation of DVL antagonizes the action of GSK3B. When GSK3B activity is inhibited the complex dissociates, CTNNB1 is dephosphorylated and is no longer targeted for destruction. The stabilized protein translocates to the nucleus, where it binds TCF/LEF-1 family members, BCL9, BCL9L and possibly also RUVBL1 and CHD8. Binds CTNNBIP and EP300. CTNNB1 forms a ternary complex with LEF1 and EP300 that is disrupted by CTNNBIP1 binding. Interacts with TAX1BP3 (via the PDZ domain); this interaction inhibits the transcriptional activity of CTNNB1. Interacts with AJAP1, BAIAP1, CARM1, CTNNA3, CXADR and PCDH11Y. Binds NHERF1. Interacts with GLIS2 and SLC30A9. Interacts with XIRP1 and MUC1. Interacts with PTPRU (via the cytoplasmic juxtamembrane domain) and with EMD. Interacts with SCRIB. Interacts with TNIK. Interacts with SESTD1 and TRPC4. Interacts directly with AXIN1; the interaction is regulated by CDK2 phosphorylation of AXIN1. Interacts with CAV1. Interacts with TRPV4. The TRPV4 and CTNNB1 complex can interact with CDH1. Interacts with VCL. Interacts with PTPRJ. Interacts with PKT7. Interacts with FAT1 (via the cytoplasmic domain). Interacts with NANOS1 and NDRG2. Interacts with NEK2, CDK2 and CDK5. Interacts with PTK6. Interacts with SOX7; this interaction may lead to proteasomal degradation of active CTNNB1 and thus inhibition of Wnt/beta-catenin-stimulated transcription. Identified in a complex with HINT1 and MITF. Interacts with FHIT. The CTNNB1 and TCF4 complex interacts with PML. Interacts with FERMT2. Identified in a complex with TCF4 and FERMT2. Interacts with RORA. May interact with P-cadherin/CDH3. Interacts with RAPGEF2. Interacts with RNF220. Interacts with CTNND2. Interacts (via the C-terminal region) with CBY1. The complex composed, at least, of APC, CTNNB1 and GSK3B interacts with JPT1; the interaction requires the inactive form of GSK3B (phosphorylated at 'Ser-9'). Interacts with DLG5. Interacts with FAM53B; promoting translocation to the nucleus. Interacts with TMEM170B. Interacts with AHI1. Interacts with GID8. Component of an cadherin:catenin adhesion complex composed of at least of CDH26, beta-catenin/CTNNB1, alpha-catenin/CTNNA1 and p120 catenin/CTNND1. Forms a complex comprising APPL1, RUVBL2, APPL2, HDAC1 and HDAC2. Interacts with IRF2BPL; mediates the ubiquitination and degradation of CTNNB1. Interacts with LMBR1L and AMFR. Interacts with LMBR1L. Interacts with SOX30; prevents interaction of CTNNB1 with TCF7L2/TCF4 and leads to inhibition of Wnt signaling. Interacts with SOX9; inhibiting CTNNB1 activity by competing with the binding sites of TCF/LEF within CTNNB1, thereby inhibiting the Wnt signaling. Interacts with SPN/CD43 cytoplasmic tail. Interacts (when phosphorylated at Tyr-333) with isoform M2 of PKM (PKM2); promoting transcription activation. Interacts with PKP2 (via HEAD domain). Interacts with CDH1. Interacts (when unphosphorylated) with FLYWCH1, perhaps preventing interaction of CTNNB1 with TCF4, and thereby regulating transcription activation; phosphorylation of CTNNB1 may inhibit the interaction. Interacts (via the central armadillo domains) with probable transcriptional regulator ADNP (via N-terminal region); interaction is direct and stabilizes CTNNB1 by modulating its phosphorylation by glycogen synthase kinase-3 beta GSK3B. Interacts with NR5A2. Interacts with DSG2; the interaction promotes localization of CTNNB1 at cell junctions thus reducing its nuclear localization and subsequent transcription of CTNNB1/TCF-target genes. Phosphorylation by GSK3B requires prior phosphorylation of Ser-45 by another kinase. Phosphorylation proceeds then from Thr-41 to Ser-33. Phosphorylated by NEK2. EGF stimulates tyrosine phosphorylation. Phosphorylated on Ser-33 and Ser-37 by HIPK2. This phosphorylation triggers proteasomal degradation. Phosphorylation at Ser-552 by AMPK promotes stabilization of the protein, enhancing TCF/LEF-mediated transcription. Phosphorylation on Ser-191 and Ser-246 by CDK5. Phosphorylation by CDK2 regulates insulin internalization. Phosphorylation by PTK6 at Tyr-64, Tyr-142, Tyr-331 and/or Tyr-333 with the predominant site at Tyr-64 is not essential for inhibition of transcriptional activity. Phosphorylation by SRC at Tyr-333 promotes interaction with isoform M2 of PKM (PKM2); promoting transcription activation. In terms of processing, ubiquitinated by the SCF(BTRC) E3 ligase complex when phosphorylated by GSK3B, leading to its degradation. Ubiquitinated by a E3 ubiquitin ligase complex containing UBE2D1, SIAH1, CACYBP/SIP, SKP1, APC and TBL1X, leading to its subsequent proteasomal degradation. Ubiquitinated and degraded following interaction with SOX9. Ubiquitinated via 'Lys-11'- and 'Lys-29'-linked ubiquitin chains by UBR5, leading to its stabilization. Post-translationally, S-nitrosylation at Cys-619 within adherens junctions promotes VEGF-induced, NO-dependent endothelial cell permeability by disrupting interaction with E-cadherin, thus mediating disassembly adherens junctions. O-glycosylation at Ser-23 decreases nuclear localization and transcriptional activity, and increases localization to the plasma membrane and interaction with E-cadherin CDH1. In terms of processing, deacetylated at Lys-49 by SIRT1.

It localises to the cytoplasm. Its subcellular location is the nucleus. The protein localises to the cytoskeleton. The protein resides in the cell junction. It is found in the adherens junction. It localises to the cell membrane. Its subcellular location is the microtubule organizing center. The protein localises to the centrosome. The protein resides in the spindle pole. It is found in the synapse. It localises to the cilium basal body. Key downstream component of the canonical Wnt signaling pathway. In the absence of Wnt, forms a complex with AXIN1, AXIN2, APC, CSNK1A1 and GSK3B that promotes phosphorylation on N-terminal Ser and Thr residues and ubiquitination of CTNNB1 via BTRC and its subsequent degradation by the proteasome. In the presence of Wnt ligand, CTNNB1 is not ubiquitinated and accumulates in the nucleus, where it acts as a coactivator for transcription factors of the TCF/LEF family, leading to activate Wnt responsive genes. Also acts as a coactivator for other transcription factors, such as NR5A2. Promotes epithelial to mesenchymal transition/mesenchymal to epithelial transition (EMT/MET) via driving transcription of CTNNB1/TCF-target genes. Involved in the regulation of cell adhesion, as component of an E-cadherin:catenin adhesion complex. Acts as a negative regulator of centrosome cohesion. Involved in the CDK2/PTPN6/CTNNB1/CEACAM1 pathway of insulin internalization. Blocks anoikis of malignant kidney and intestinal epithelial cells and promotes their anchorage-independent growth by down-regulating DAPK2. Disrupts PML function and PML-NB formation by inhibiting RANBP2-mediated sumoylation of PML. Promotes neurogenesis by maintaining sympathetic neuroblasts within the cell cycle. Involved in chondrocyte differentiation via interaction with SOX9: SOX9-binding competes with the binding sites of TCF/LEF within CTNNB1, thereby inhibiting the Wnt signaling. Acts as a positive regulator of odontoblast differentiation during mesenchymal tooth germ formation, via promoting the transcription of differentiation factors such as LEF1, BMP2 and BMP4. Activity is repressed in a MSX1-mediated manner at the bell stage of mesenchymal tooth germ formation which prevents premature differentiation of odontoblasts. This chain is Catenin beta-1, found in Bos taurus (Bovine).